We begin with the raw amino-acid sequence, 943 residues long: MNKKHGFPLTLTALAIATAFPAYAAQAGGATPDAAQTQSLKEITVRAAKVGRRSKEATGLGKIVKTSETLNKEQVLGIRDLTRYDPGVAVVEQGNGASGGYSIRGVDKNRVAVSVDGVAQIQAFTVQGSLSGYGGRGGSGAINEIEYENISTVEIDKGAGSSDHGSGALGGAVAFRTKEAADLISDGKSWGIQAKTAYGSKNRQFMKSLGAGFSKDGWEGLLIRTERQGRETRPHGDIADGVEYGIDRLDAFRQTYDIKRKTREPFFSVEGERESKPVAKLAGYGKYLNNQLNRWVKERIEQNQPLSAEEEAQVREAQARHENLSAQAYTGGGRILPDPMDYRSGSWLAKLGYRFGGRHYVGGVFEDTKQRYDIRDMTEKQYYGTDEAEKFRDKSGVYDGDDFRDGLYFVPNIEEWKGDKNLVRGIGLKYSRTKFIDEHHRRRRMGLLYRYENEAYSDNWADKAVLSFDKQGVATDNNTLKLNCAVYPAVDKSCRASADKPYSYDSSDRFHYREQHNVLNASFEKSLKNKWTKHHLTLGFGYDASKAISRPEQLSHNAARISESTGFDENNQDKYLLGKPEVVEGSVCGYIETLRSRKCVPRKINGSNIHISLNDRFSIGKYFDFSLGGRYDRKNFTTSEELVRSGRYVDRSWNSGILFKPNRHFSVSYRASSGFRTPSFQELFGIDIYHDYPKGWQRPALKSEKAANREIGLQWKGDFGFLEISSFRNRYTDMIAVADHKTKLPNQAGQLTEIDIRDYYNAQNMSLQGVNILGKIDWNGVYGKLPEGLYTTLAYNRIKPKSVSNRPGLSLRSYALDAVQPSRYVLGFGYDQPEGKWGANIMLTYSKGKNPDELAYLAGDQKRYSTKRASSSWSTADVSAYLNLKKRLTLRAAIYNIGNYRYVTWESLRQTAESTANRHGGDSNYGRYAAPGRNFSLALEMKF.

The signal sequence occupies residues 1-27 (MNKKHGFPLTLTALAIATAFPAYAAQA). The 127-residue stretch at 52–178 (RRSKEATGLG…LGGAVAFRTK (127 aa)) folds into the TBDR plug domain. The 755-residue stretch at 189 to 943 (SWGIQAKTAY…NFSLALEMKF (755 aa)) folds into the TBDR beta-barrel domain. The short motif at 926–943 (GRYAAPGRNFSLALEMKF) is the TonB C-terminal box element.

This sequence belongs to the TonB-dependent receptor family.

It localises to the cell outer membrane. Functionally, unknown. May be an iron-siderophore receptor. The chain is Lactoferrin-binding protein A (lbpA) from Neisseria meningitidis serogroup B (strain ATCC BAA-335 / MC58).